The primary structure comprises 1300 residues: MEEASLCLGVSSAEPEAEPHLSGPVLNGQYAMSQKLHQITSQLSHAFPELHPRPNPEEKPPASLEEKAHVPMSGQPMGSQMALLANQLGREVDTSLNGRVDLQQFLNGQNLGIMSQMSDIEDDARKNRKYPCPLCGKRFRFNSILSLHMRTHTGEKPFKCPYCDHRAAQKGNLKIHLRTHKLGNLGKGRGRVREENRLLHELEERAILRDKQLKGSLLQPRPDLKPPPHAQQAPLAACTLALQANHSVPDVAHPVPSPKPASVQEDAVAPAAGFRCTFCKGKFKKREELDRHIRILHKPYKCTLCDFAASQEEELISHVEKAHITAESAQGQGPNGGGEQSANEFRCEVCGQVFSQAWFLKGHMRKHKDSFEHCCQICGRRFKEPWFLKNHMKVHLNKLSVKNKSPSDPEVPVPMGGMSQEAHANLYSRYLSCLQSGFMTPDKAGLSEPSQLYGKGELPMKEKEALGKLLSPISSMAHGVPEGDKHSLLGCLNLVPPLKSSCIERLQAAAKAAEMDPVNSYQAWQLMARGMAMEHGFLSKEHPLQRNHEDTLANAGVLFDKEKREYVLVGADGSKQKMPADLVHSTKVGSQRDLPSKLDPLESSRDFLSHGLNQTLEYNLQGPGNMKEKPTECPDCGRVFRTYHQVVVHSRVHKRDRKGEEDGLHVGLDERRGSGSDQESQSVSRSTTPGSSNVTEESGVGGGLSQTGSAQEDSPHPSSPSSSDIGEEAGRSAGVQQPALLRDRSLGSAMKDCPYCGKTFRTSHHLKVHLRIHTGEKPYKCPHCDYAGTQSASLKYHLERHHRERQNGAGPLSGQPPNQDHKDEMSSKASLFIRPDILRGAFKGLPGIDFRGGPASQQWTSGVLSSGDHSGQATGMSSEVPSDALKGTDLPSKSTHFSEIGRAYQSIVSNGVNFQGSLQAFMDSFVLSSLKKEKDMKDKALADPPSMKVHGVDGGEEKPSGKSSQRKSEKSQYEPLDLSVRPDAASLPGSSVTVQDSIAWHGCLFCAFTTSSMELMALHLQANHLGKAKRKDNTIGVTVNCKDQAREASKMALLPSLQSNKDLGLSNMISSLDSASEKMAQGQLKETLGEQKSGAWTGHVDPAFCNFPSDFYKQFGVYPGMVGSGASSSCPNKEPDGKAHSEEDVPILIPETTSKNTTDDLSDIASSEDMDSSKGENNDEEDVETEPEMMTKPLSALSKDSSSDGGDSLQPTGTSQPVQGLVSPLSQAPEKQWHSQGLLQAQDPLAGLPKPERGPQSLDKPMNMLSVLRAYSSDGLAAFNGLASSTANSGCIKRPDLCGK.

Disordered regions lie at residues 1–26 and 47–77; these read MEEA…GPVL and FPEL…GQPM. Basic and acidic residues predominate over residues 48–69; sequence PELHPRPNPEEKPPASLEEKAH. 6 C2H2-type zinc fingers span residues 130–152, 158–180, 274–297, 300–323, 345–367, and 373–395; these read YPCP…MRTH, FKCP…LRTH, FRCT…RILH, YKCT…EKAH, FRCE…MRKH, and HCCQ…MKVH. Disordered stretches follow at residues 584-604 and 650-739; these read HSTK…LESS and SRVH…QQPA. Basic and acidic residues predominate over residues 594–604; the sequence is LPSKLDPLESS. The C2H2-type 7 zinc-finger motif lies at 631–653; that stretch reads TECPDCGRVFRTYHQVVVHSRVH. Over residues 657-674 the composition is skewed to basic and acidic residues; it reads RKGEEDGLHVGLDERRGS. The span at 675–696 shows a compositional bias: polar residues; the sequence is GSDQESQSVSRSTTPGSSNVTE. 2 C2H2-type zinc fingers span residues 751-773 and 779-801; these read KDCP…LRIH and YKCP…LERH. Residues 802–826 form a disordered region; the sequence is HRERQNGAGPLSGQPPNQDHKDEMS. Ser-826 and Ser-827 each carry phosphoserine. Residues 856 to 880 are compositionally biased toward polar residues; sequence SQQWTSGVLSSGDHSGQATGMSSEV. Disordered stretches follow at residues 856-893, 937-985, and 1124-1260; these read SQQW…LPSK, KDKA…PDAA, and SGAS…SLDK. Composition is skewed to basic and acidic residues over residues 950-972 and 1133-1143; these read HGVD…EKSQ and KEPDGKAHSEE. Acidic residues-rich tracts occupy residues 1160 to 1170 and 1178 to 1187; these read DLSDIASSEDM and NDEEDVETEP. Positions 1194-1209 are enriched in low complexity; the sequence is LSALSKDSSSDGGDSL.

It belongs to the krueppel C2H2-type zinc-finger protein family.

The protein resides in the nucleus. In terms of biological role, transcriptional repressor that negatively regulates neuron differentiation by repressing retinoic acid-induced gene transcription. Binds and interrupts RARA from binding to retinoic acid response elements (RARE) composed of tandem 5'-AGGTCA-3' sites known as DR1-DR5. Recognizes and binds 2 copies of the core DNA sequence 5'-CCCCCA-3'. The sequence is that of Zinc finger protein 536 (ZNF536) from Homo sapiens (Human).